Here is a 906-residue protein sequence, read N- to C-terminus: Alanine--tRNA ligase (906 aa).

Residues H600, H604, C703, and H707 each contribute to the Zn(2+) site.

Belongs to the class-II aminoacyl-tRNA synthetase family. Homodimer. Zn(2+) is required as a cofactor.

It is found in the cytoplasm. The catalysed reaction is tRNA(Ala) + L-alanine + ATP = L-alanyl-tRNA(Ala) + AMP + diphosphate. Functionally, catalyzes the attachment of alanine to tRNA(Ala) in a two-step reaction: alanine is first activated by ATP to form Ala-AMP and then transferred to the acceptor end of tRNA(Ala). Incorrectly charged aminoacyl-tRNA(Ala) is also edited in situ by the editing domain. The polypeptide is Alanine--tRNA ligase (alaS) (Archaeoglobus fulgidus (strain ATCC 49558 / DSM 4304 / JCM 9628 / NBRC 100126 / VC-16)).